A 367-amino-acid chain; its full sequence is Heme A synthase (367 aa).

Helical transmembrane passes span 26–46, 111–131, 139–159, 174–194, 212–232, 272–292, 305–325, and 327–347; these read IRGW…VGGA, LLAR…WVTG, LPLL…WWMV, LATH…IYRG, AAVI…VAGL, FVHR…MIAA, SVLL…TLLL, and VPIG…GFAI. His274 contacts heme. His335 is a binding site for heme.

The protein belongs to the COX15/CtaA family. Type 2 subfamily. In terms of assembly, interacts with CtaB. Heme b serves as cofactor.

It localises to the cell membrane. It catalyses the reaction Fe(II)-heme o + 2 A + H2O = Fe(II)-heme a + 2 AH2. The protein operates within porphyrin-containing compound metabolism; heme A biosynthesis; heme A from heme O: step 1/1. Its function is as follows. Catalyzes the conversion of heme O to heme A by two successive hydroxylations of the methyl group at C8. The first hydroxylation forms heme I, the second hydroxylation results in an unstable dihydroxymethyl group, which spontaneously dehydrates, resulting in the formyl group of heme A. The polypeptide is Heme A synthase (Sinorhizobium medicae (strain WSM419) (Ensifer medicae)).